The sequence spans 302 residues: Probable 2-(5''-triphosphoribosyl)-3'-dephosphocoenzyme-A synthase (302 aa).

This sequence belongs to the CitG/MdcB family.

The catalysed reaction is 3'-dephospho-CoA + ATP = 2'-(5''-triphospho-alpha-D-ribosyl)-3'-dephospho-CoA + adenine. This Salmonella gallinarum (strain 287/91 / NCTC 13346) protein is Probable 2-(5''-triphosphoribosyl)-3'-dephosphocoenzyme-A synthase.